Here is a 427-residue protein sequence, read N- to C-terminus: MSAEPSRNPRTPPVSAVDIDGAAKRIAPVVTPTPLQLSDRLSAITGAAVYLKREDLQTVRSYKLRGAYNLLVQLTDEEIAAGVVCSSAGNHAQGVAYACRSLGVHGRVYVPAKTPKQKWDRIRYHGGAFIELIVGRSTYDLAAAAAVDDIERTGATLVPPYDDVRVIAGQGTIAVELLEQLNTEPDLVVVPVGGGGCIAGMTTYLAERTANTAVLGVEPAGAAAMMAALAAGEPVTLDYVDQFVDGAAVNRVGTLPYAALTAAGDMVSITTVDEGAVCTAMLDLYQNEGIIAEPAGALSVAGLLETDIEPGSTVVCLISGGNNDVLRYGEVLERSLIHLGLKHYFLVDFPQKPGALRRFLDEVLGPNDDITLFEYVKRNNRETGEALVGIQLGSAVDLDVLLARMQGTEMHVETLQPGSPAYRYLLL.

Lysine 63 carries the N6-(pyridoxal phosphate)lysine modification. Residues asparagine 90, 193–197 (GGGGC), and serine 319 each bind pyridoxal 5'-phosphate. Residues 343–417 (HYFLVDFPQK…TEMHVETLQP (75 aa)) form the ACT-like domain.

This sequence belongs to the serine/threonine dehydratase family. As to quaternary structure, homotetramer. It depends on pyridoxal 5'-phosphate as a cofactor.

It catalyses the reaction L-threonine = 2-oxobutanoate + NH4(+). The protein operates within amino-acid biosynthesis; L-isoleucine biosynthesis; 2-oxobutanoate from L-threonine: step 1/1. Catalyzes the anaerobic formation of alpha-ketobutyrate and ammonia from threonine in a two-step reaction. The first step involved a dehydration of threonine and a production of enamine intermediates (aminocrotonate), which tautomerizes to its imine form (iminobutyrate). Both intermediates are unstable and short-lived. The second step is the nonenzymatic hydrolysis of the enamine/imine intermediates to form 2-ketobutyrate and free ammonia. In the low water environment of the cell, the second step is accelerated by RidA. The chain is L-threonine dehydratase biosynthetic IlvA (ilvA) from Mycobacterium leprae (strain TN).